Consider the following 577-residue polypeptide: Outer spore wall assembly protein SHE10 (577 aa).

Positions 1–23 (MGKLIKLITTLTVLVSLLQYCCE) are cleaved as a signal peptide. Coiled coils occupy residues 379 to 416 (NETR…ENVE) and 513 to 561 (ILRS…EEDV). Residues 525-545 (RERKERERKEREKAAAEEFQR) are compositionally biased toward basic and acidic residues. Residues 525–577 (RERKERERKEREKAAAEEFQRQQELLRQQEEEDEEDVSYTSTSTITTTTTMTL) form a disordered region. The span at 562 to 577 (SYTSTSTITTTTTMTL) shows a compositional bias: low complexity.

It belongs to the SHE10 family. Component of the mitochondria-localized RNase mitochondrial RNA-processing (RNase MRP) composed of one single RNA encoded by the NME1 gene and at least 31 proteins. Absent in the nucleus-localized RNase MRP (NuMRP).

Its subcellular location is the mitochondrion. Its function is as follows. Involved in spore wall assembly. May be a component of the mitochondrial RNase MRP (MtMRP), a ribonucleoprotein endoribonuclease involved in the cleaving RNA transcripts to generate primers for DNA replication in mitochondria. This chain is Outer spore wall assembly protein SHE10, found in Saccharomyces cerevisiae (strain Lalvin EC1118 / Prise de mousse) (Baker's yeast).